A 306-amino-acid chain; its full sequence is Homoserine kinase (306 aa).

95–105 (PHSRGLGSSAA) serves as a coordination point for ATP.

It belongs to the GHMP kinase family. Homoserine kinase subfamily.

Its subcellular location is the cytoplasm. It carries out the reaction L-homoserine + ATP = O-phospho-L-homoserine + ADP + H(+). The protein operates within amino-acid biosynthesis; L-threonine biosynthesis; L-threonine from L-aspartate: step 4/5. Its function is as follows. Catalyzes the ATP-dependent phosphorylation of L-homoserine to L-homoserine phosphate. The sequence is that of Homoserine kinase from Mycobacteroides abscessus (strain ATCC 19977 / DSM 44196 / CCUG 20993 / CIP 104536 / JCM 13569 / NCTC 13031 / TMC 1543 / L948) (Mycobacterium abscessus).